The following is a 1198-amino-acid chain: Potassium/sodium hyperpolarization-activated cyclic nucleotide-gated channel 4 (1198 aa).

The Cytoplasmic segment spans residues 1–266 (MDKLPPSMRK…PYSDFRFYWD (266 aa)). Residues 25 to 183 (IMDEEEDGEE…PASASCEQPS (159 aa)) form a disordered region. Acidic residues predominate over residues 26-36 (MDEEEDGEEEG). Gly residues predominate over residues 105–118 (SRGGGSGGAGGGSS). The span at 121-132 (HLHDSAEERRLI) shows a compositional bias: basic and acidic residues. Position 139 is a phosphoserine (S139). The span at 164–174 (ASPPPQQPPQP) shows a compositional bias: pro residues. Residues 209-260 (GQSGFMQRQFGAMLQPGVNKFSLRMFGSQKAVEREQERVKSAGFWIIHPYSD) are involved in subunit assembly. The helical transmembrane segment at 267–287 (LTMLLLMVGNLIIIPVGITFF) threads the bilayer. Residues 288–293 (KDENTT) are Extracellular-facing. A helical transmembrane segment spans residues 294-314 (PWIVFNVVSDTFFLIDLVLNF). Over 315–340 (RTGIVVEDNTEIILDPQRIKMKYLKS) the chain is Cytoplasmic. The chain crosses the membrane as a helical span at residues 341–361 (WFVVDFISSIPVDYIFLIVET). At 362 to 368 (RIDSEVY) the chain is on the extracellular side. Residues 369 to 389 (KTARALRIVRFTKILSLLRLL) traverse the membrane as a helical; Voltage-sensor segment. The Cytoplasmic segment spans residues 390-420 (RLSRLIRYIHQWEEIFHMTYDLASAVVRIVN). The helical transmembrane segment at 421–441 (LIGMMLLLCHWDGCLQFLVPM) threads the bilayer. The Extracellular portion of the chain corresponds to 442-464 (LQDFPHDCWVSINGMVNNSWGKQ). N-linked (GlcNAc...) asparagine glycosylation occurs at N458. Positions 465–486 (YSYALFKAMSHMLCIGYGRQAP) form an intramembrane region, pore-forming. Residues 487-496 (VGMSDVWLTM) lie on the Extracellular side of the membrane. The helical transmembrane segment at 497-517 (LSMIVGATCYAMFIGHATALI) threads the bilayer. The Cytoplasmic portion of the chain corresponds to 518–1198 (QSLDSSRRQY…PVRSKLPSNL (681 aa)). Residues Y559, K562, F564, and E566 each coordinate 3',5'-cyclic GMP. Residues G659, E660, C662, R669, T670, V673, and R710 each coordinate 3',5'-cyclic AMP. The tract at residues 804-1198 (AIFRPPPGPG…PVRSKLPSNL (395 aa)) is disordered. 2 stretches are compositionally biased toward low complexity: residues 831–856 (SLIP…SSSS) and 866–880 (SAPP…SSSS). A compositionally biased stretch (pro residues) spans 881 to 894 (SPPPGACSSPPAPT). Composition is skewed to low complexity over residues 895–905 (PSTSTAATTTG), 913–937 (LGGS…SPQA), and 965–985 (RSPS…SPGL). Positions 1027 to 1040 (GHSPGPPRTFPSAP) are enriched in pro residues. Residues 1043–1054 (ASGSHGSLLLPP) are compositionally biased toward low complexity. A phosphoserine mark is found at S1103 and S1106. Residues 1120–1132 (AGGGSGSSGGLGP) show a composition bias toward gly residues.

It belongs to the potassium channel HCN family. Homotetramer. The potassium channel is composed of a homo- or heterotetrameric complex of pore-forming subunits. Interacts with PEX5L with a 4:4 HCN4:PEX5L stoichiometry; reduces the effects of cAMP on the voltage-dependence and rate of activation. Interacts with IRAG1; regulates HCN4 channel activity. Interacts with IRAG2; regulates HCN4 channel activity. In terms of processing, S-palmitoylated. As to expression, highly expressed in pyramidal and granule layer of the hippocampus, in thalamus anterior nucleus, in the supraoptic nucleus in hypothalamus, in cerebellum, and in trapezoid nuclei and superior olivary complex in the auditory system. Detected in a subset of elongated cells in taste buds.

The protein resides in the cell membrane. It carries out the reaction K(+)(in) = K(+)(out). The enzyme catalyses Na(+)(in) = Na(+)(out). With respect to regulation, activated by cAMP and at 100 times higher concentrationsand to a lesser extent by cGMP and cCMP. cAMP binding causes a conformation change that leads to the assembly of an active tetramer and channel opening. Binding of cAMP removes a tonic inhibition conferred by cyclic nucleotide-binding domain (CNBD) on channel opening. Cyclic dinucleotides can modulate HCN4 channel; cyclic dinucleotides acting as potent antagonists of cAMP. Inhibited by extracellular Cs(+) ions. Auxiliary subunits can also regulate HCN4 channel. IRAG1 causes a gain-of-function by shifting HCN4 activation to more depolarized membrane potentials in the absence of cAMP. In contrast, IRAG2 causes a loss-of-function by inhibiting cAMP-dependent potentiation of HCN4 activation. In terms of biological role, hyperpolarization-activated ion channel that are permeable to Na(+) and K(+) ions with very slow activation and inactivation. Exhibits higher selectivity for K(+) over Na(+) ions. Contributes to the native pacemaker currents in heart (If) that regulate the rhythm of heart beat. Contributes to the native pacemaker currents in neurons (Ih). May mediate responses to sour stimuli. The chain is Potassium/sodium hyperpolarization-activated cyclic nucleotide-gated channel 4 (Hcn4) from Rattus norvegicus (Rat).